An 835-amino-acid chain; its full sequence is BCL11 transcription factor A (835 aa).

Residues 1-12 (MSRRKQGKPQHL) are compositionally biased toward basic residues. Positions 1-41 (MSRRKQGKPQHLSKREFSPEPLEAILTDDEPDHGPLGAPEG) are disordered. The interval 1–210 (MSRRKQGKPQ…SEHGSPLTPR (210 aa)) is required for nuclear body formation and for SUMO1 recruitment. The C2HC-type zinc finger occupies 45–71 (LLTCGQCQMNFPLGDILIFIEHKRKQC). Zn(2+) is bound by residues C48, C51, H66, and C71. S86 is subject to Phosphoserine. Residues K123 and K164 each participate in a glycyl lysine isopeptide (Lys-Gly) (interchain with G-Cter in SUMO2) cross-link. The C2H2-type 1 zinc-finger motif lies at 170–193 (YTCTTCKQPFTSAWFLLQHAQNTH). S205 is subject to Phosphoserine. Asymmetric dimethylarginine is present on R271. The segment at 323–376 (AGNTSSPPLSPGRPSPMQRLLQPFQPGSKPPFLATPPLPPLQSAPPPSQPPVKS) is disordered. Phosphoserine occurs at positions 332 and 337. Pro residues predominate over residues 355 to 372 (LATPPLPPLQSAPPPSQP). 2 C2H2-type zinc fingers span residues 377–399 (KSCE…RRSH) and 405–429 (YKCN…THMH). The segment covering 421–430 (KRHMKTHMHK) has biased composition (basic residues). Disordered stretches follow at residues 421 to 458 (KRHM…LVGS), 471 to 512 (KSEN…ERVD), and 572 to 619 (RGHL…GLSK). The segment covering 441–450 (GLSTASSPEP) has biased composition (polar residues). Phosphoserine occurs at positions 446 and 447. The span at 482 to 506 (NGDEEEEEDDEEEEEEEEEEEEELT) shows a compositional bias: acidic residues. Over residues 574-584 (HLAEAEGHRDT) the composition is skewed to basic and acidic residues. S608 is subject to Phosphoserine. A Glycyl lysine isopeptide (Lys-Gly) (interchain with G-Cter in SUMO2) cross-link involves residue K620. S625 and S630 each carry phosphoserine. K634 participates in a covalent cross-link: Glycyl lysine isopeptide (Lys-Gly) (interchain with G-Cter in SUMO1). Residues 678–740 (DSRQSPFASS…GRPSSKEGRR (63 aa)) form a disordered region. Low complexity predominate over residues 682-696 (SPFASSSEHSSENGS). At T701 the chain carries Phosphothreonine. Gly residues predominate over residues 706 to 720 (LDGGISGRSGTGSGG). The segment at 737–835 (EGRRSDTCEY…RVLNNDIKTE (99 aa)) is DNA-binding. The C2H2-type 4 zinc finger occupies 742 to 764 (DTCEYCGKVFKNCSNLTVHRRSH). Positions 744, 747, 760, and 764 each coordinate Zn(2+). Residues 765 to 769 (TGERP) are disordered. A C2H2-type 5 zinc finger spans residues 770-792 (YKCELCNYACAQSSKLTRHMKTH). Zn(2+) is bound by residues C772, C775, H788, and H792. The interval 793 to 799 (GQVGKDV) is disordered. The segment at 800–823 (YKCEICKMPFSVYSTLEKHMKKWH) adopts a C2H2-type 6 zinc-finger fold. Zn(2+) contacts are provided by C802, C805, H818, and H823. K833 participates in a covalent cross-link: Glycyl lysine isopeptide (Lys-Gly) (interchain with G-Cter in SUMO2).

In terms of assembly, homotetrameric; self-associates via C2HC-type zinc finger domain. Interacts with MTA2, a component of the nucleosome remodeling and deacetylase (NuRD) repressor complex. Interacts (via its C2H2-type zinc finger domains 4, 5 and 6) with promoter region of gamma-globulin. Interacts with NR2F1, PIAS3, NR2F2 and NR2F6. Isoform 1, isoform 2 and isoform 3 form homodimers and heterodimers. Isoform 2 interacts with TBR1. Sumoylated with SUMO1. As to expression, expressed at high levels in brain, spleen thymus, bone marrow and testis. Expressed in CD34-positive myeloid precursor cells, B-cells, monocytes and megakaryocytes. Expression is tightly regulated during B-cell development. Expressed in fetal and adult brain, and in the plasmacytoid dendritic cell.

Its subcellular location is the cytoplasm. The protein localises to the nucleus. It localises to the chromosome. The protein resides in the nucleus matrix. In terms of biological role, transcription factor. Associated with the BAF SWI/SNF chromatin remodeling complex. Binds to the 5'-TGACCA-3' sequence motif in regulatory regions of target genes, including a distal promoter of the HBG1 hemoglobin subunit gamma-1 gene. Involved in regulation of the developmental switch from gamma- to beta-globin, probably via direct repression of HBG1; hence indirectly repressing fetal hemoglobin (HbF) level. Involved in brain development. May play a role in hematopoiesis. Essential factor in lymphopoiesis required for B-cell formation in fetal liver. May function as a modulator of the transcriptional repression activity of NR2F2. In Homo sapiens (Human), this protein is BCL11 transcription factor A (BCL11A).